The sequence spans 349 residues: Phosphoribosylformylglycinamidine cyclo-ligase (349 aa).

The protein belongs to the AIR synthase family.

The protein resides in the cytoplasm. It catalyses the reaction 2-formamido-N(1)-(5-O-phospho-beta-D-ribosyl)acetamidine + ATP = 5-amino-1-(5-phospho-beta-D-ribosyl)imidazole + ADP + phosphate + H(+). It functions in the pathway purine metabolism; IMP biosynthesis via de novo pathway; 5-amino-1-(5-phospho-D-ribosyl)imidazole from N(2)-formyl-N(1)-(5-phospho-D-ribosyl)glycinamide: step 2/2. This Lawsonia intracellularis (strain PHE/MN1-00) protein is Phosphoribosylformylglycinamidine cyclo-ligase.